Here is a 326-residue protein sequence, read N- to C-terminus: MIARIWSGESPLWRLLLPLSWLYGLVSGVIRLSYQLGWQKAWRAPVPVVVVGNLTAGGNGKTPVVIWLVEQLQQRGIRVGVVSRGYGGKAERYPLVLDDRTSTALAGDEPVLIHQRTGAPVAVAPLRSDAVKALLSAHDLQMIVTDDGLQHYKLARDREIVVIDGVRRFGNGWWLPAGPMRERASRLQSVDAVIVNGGVARPGEIPMRLRPGMAVNLLTGERRDVSTFTNVVAMAGIGHPPRFFATLESCGVQPVKTVALADHQALSQADVAALVTADQTLLMTEKDAVKCRDFAAANWWYLPVDAIMADERAQRLLADLATLAQR.

55 to 62 provides a ligand contact to ATP; that stretch reads TAGGNGKT.

Belongs to the LpxK family.

It catalyses the reaction a lipid A disaccharide + ATP = a lipid IVA + ADP + H(+). It participates in glycolipid biosynthesis; lipid IV(A) biosynthesis; lipid IV(A) from (3R)-3-hydroxytetradecanoyl-[acyl-carrier-protein] and UDP-N-acetyl-alpha-D-glucosamine: step 6/6. Functionally, transfers the gamma-phosphate of ATP to the 4'-position of a tetraacyldisaccharide 1-phosphate intermediate (termed DS-1-P) to form tetraacyldisaccharide 1,4'-bis-phosphate (lipid IVA). This Klebsiella pneumoniae subsp. pneumoniae (strain ATCC 700721 / MGH 78578) protein is Tetraacyldisaccharide 4'-kinase.